The following is a 195-amino-acid chain: Probable nicotinate-nucleotide adenylyltransferase (195 aa).

Belongs to the NadD family.

The enzyme catalyses nicotinate beta-D-ribonucleotide + ATP + H(+) = deamido-NAD(+) + diphosphate. It participates in cofactor biosynthesis; NAD(+) biosynthesis; deamido-NAD(+) from nicotinate D-ribonucleotide: step 1/1. In terms of biological role, catalyzes the reversible adenylation of nicotinate mononucleotide (NaMN) to nicotinic acid adenine dinucleotide (NaAD). This is Probable nicotinate-nucleotide adenylyltransferase from Gluconobacter oxydans (strain 621H) (Gluconobacter suboxydans).